A 428-amino-acid chain; its full sequence is Serine--tRNA ligase (428 aa).

235–237 provides a ligand contact to L-serine; that stretch reads TAE. Position 266–268 (266–268) interacts with ATP; that stretch reads RYE. Residue Glu-289 participates in L-serine binding. 353-356 serves as a coordination point for ATP; the sequence is EVSS. Position 389 (Ser-389) interacts with L-serine.

The protein belongs to the class-II aminoacyl-tRNA synthetase family. Type-1 seryl-tRNA synthetase subfamily. In terms of assembly, homodimer. The tRNA molecule binds across the dimer.

The protein resides in the cytoplasm. The enzyme catalyses tRNA(Ser) + L-serine + ATP = L-seryl-tRNA(Ser) + AMP + diphosphate + H(+). It catalyses the reaction tRNA(Sec) + L-serine + ATP = L-seryl-tRNA(Sec) + AMP + diphosphate + H(+). It participates in aminoacyl-tRNA biosynthesis; selenocysteinyl-tRNA(Sec) biosynthesis; L-seryl-tRNA(Sec) from L-serine and tRNA(Sec): step 1/1. Catalyzes the attachment of serine to tRNA(Ser). Is also able to aminoacylate tRNA(Sec) with serine, to form the misacylated tRNA L-seryl-tRNA(Sec), which will be further converted into selenocysteinyl-tRNA(Sec). In Blochmanniella pennsylvanica (strain BPEN), this protein is Serine--tRNA ligase.